The following is a 401-amino-acid chain: S-adenosylmethionine synthase (401 aa).

136 to 141 (GTGSSD) is a binding site for ATP. Residues 278–305 (GDDGSVGRGNRSNGLITPSRPMSMEATS) form a disordered region.

It belongs to the AdoMet synthase 2 family. Requires Mg(2+) as cofactor.

The catalysed reaction is L-methionine + ATP + H2O = S-adenosyl-L-methionine + phosphate + diphosphate. The protein operates within amino-acid biosynthesis; S-adenosyl-L-methionine biosynthesis; S-adenosyl-L-methionine from L-methionine: step 1/1. Its function is as follows. Catalyzes the formation of S-adenosylmethionine from methionine and ATP. This chain is S-adenosylmethionine synthase, found in Methanococcoides burtonii (strain DSM 6242 / NBRC 107633 / OCM 468 / ACE-M).